The chain runs to 277 residues: NH(3)-dependent NAD(+) synthetase (277 aa).

Position 47-54 (47-54 (GISGGQDS)) interacts with ATP. Residue Asp53 coordinates Mg(2+). Arg141 provides a ligand contact to deamido-NAD(+). An ATP-binding site is contributed by Thr161. Glu166 is a Mg(2+) binding site. Deamido-NAD(+) is bound by residues Lys174 and Asp181. Positions 190 and 212 each coordinate ATP. A deamido-NAD(+)-binding site is contributed by 261-262 (HK).

It belongs to the NAD synthetase family. In terms of assembly, homodimer.

The catalysed reaction is deamido-NAD(+) + NH4(+) + ATP = AMP + diphosphate + NAD(+) + H(+). The protein operates within cofactor biosynthesis; NAD(+) biosynthesis; NAD(+) from deamido-NAD(+) (ammonia route): step 1/1. Its function is as follows. Catalyzes the ATP-dependent amidation of deamido-NAD to form NAD. Uses ammonia as a nitrogen source. This chain is NH(3)-dependent NAD(+) synthetase, found in Lactobacillus johnsonii (strain CNCM I-12250 / La1 / NCC 533).